The sequence spans 275 residues: tRNA uridine(34) hydroxylase (275 aa).

One can recognise a Rhodanese domain in the interval 121 to 214; the sequence is SQPDVLVIDT…YLEKTYNKNG (94 aa). The active-site Cysteine persulfide intermediate is Cys174.

Belongs to the TrhO family.

It carries out the reaction uridine(34) in tRNA + AH2 + O2 = 5-hydroxyuridine(34) in tRNA + A + H2O. Functionally, catalyzes oxygen-dependent 5-hydroxyuridine (ho5U) modification at position 34 in tRNAs. In Wolbachia pipientis wMel, this protein is tRNA uridine(34) hydroxylase.